The sequence spans 316 residues: Methionyl-tRNA formyltransferase (316 aa).

Residue 110-113 (SLLP) coordinates (6S)-5,6,7,8-tetrahydrofolate.

It belongs to the Fmt family.

It carries out the reaction L-methionyl-tRNA(fMet) + (6R)-10-formyltetrahydrofolate = N-formyl-L-methionyl-tRNA(fMet) + (6S)-5,6,7,8-tetrahydrofolate + H(+). Functionally, attaches a formyl group to the free amino group of methionyl-tRNA(fMet). The formyl group appears to play a dual role in the initiator identity of N-formylmethionyl-tRNA by promoting its recognition by IF2 and preventing the misappropriation of this tRNA by the elongation apparatus. This Bacillus licheniformis (strain ATCC 14580 / DSM 13 / JCM 2505 / CCUG 7422 / NBRC 12200 / NCIMB 9375 / NCTC 10341 / NRRL NRS-1264 / Gibson 46) protein is Methionyl-tRNA formyltransferase.